Reading from the N-terminus, the 766-residue chain is AMP deaminase 3 (766 aa).

2 positions are modified to phosphoserine: Ser-85 and Ser-107. Residues 89–114 (QMPTQQDWKGPPTASPAMSPATPLVP) are disordered. A compositionally biased stretch (low complexity) spans 99–110 (PPTASPAMSPAT). The Zn(2+) site is built by His-316 and His-318. Substrate-binding positions include His-318 and 387–392 (KFNSKY). His-585 contributes to the Zn(2+) binding site. Glu-588 contacts substrate. His-607 (proton acceptor) is an active-site residue. Asp-662 contacts Zn(2+). Position 663–666 (663–666 (DPMQ)) interacts with substrate.

The protein belongs to the metallo-dependent hydrolases superfamily. Adenosine and AMP deaminases family. In terms of assembly, homotetramer. Requires Zn(2+) as cofactor. As to expression, found in heart, lung brain, spleen, kidney and to a lesser extent in liver.

The enzyme catalyses AMP + H2O + H(+) = IMP + NH4(+). Its pathway is purine metabolism; IMP biosynthesis via salvage pathway; IMP from AMP: step 1/1. Its function is as follows. AMP deaminase plays a critical role in energy metabolism. The chain is AMP deaminase 3 from Mus musculus (Mouse).